The chain runs to 296 residues: 4-hydroxybenzoate octaprenyltransferase (296 aa).

9 consecutive transmembrane segments (helical) span residues 28–48 (PIGI…AGKG), 52–72 (LNTV…GCVI), 102–122 (ALVL…FTNS), 123–140 (TTIW…CYPF), 146–166 (YYPQ…AFTA), 169–189 (GELP…TVGY), 219–239 (VIIL…GSRF), 241–261 (LGAF…WEFW), and 275–295 (FLHN…DYAL).

Belongs to the UbiA prenyltransferase family. Mg(2+) serves as cofactor.

Its subcellular location is the cell inner membrane. It carries out the reaction all-trans-octaprenyl diphosphate + 4-hydroxybenzoate = 4-hydroxy-3-(all-trans-octaprenyl)benzoate + diphosphate. It functions in the pathway cofactor biosynthesis; ubiquinone biosynthesis. Its function is as follows. Catalyzes the prenylation of para-hydroxybenzoate (PHB) with an all-trans polyprenyl group. Mediates the second step in the final reaction sequence of ubiquinone-8 (UQ-8) biosynthesis, which is the condensation of the polyisoprenoid side chain with PHB, generating the first membrane-bound Q intermediate 3-octaprenyl-4-hydroxybenzoate. This Pseudomonas syringae pv. tomato (strain ATCC BAA-871 / DC3000) protein is 4-hydroxybenzoate octaprenyltransferase.